The primary structure comprises 729 residues: Elongation factor 2 (729 aa).

The tr-type G domain maps to 19–262 (EQIRNIAIAA…MVCEHFPNPI (244 aa)). GTP contacts are provided by residues 28 to 35 (AHVDHGKT), 94 to 98 (DTPGH), and 148 to 151 (NKVD). His-597 carries the post-translational modification Diphthamide.

Belongs to the TRAFAC class translation factor GTPase superfamily. Classic translation factor GTPase family. EF-G/EF-2 subfamily.

The protein resides in the cytoplasm. Catalyzes the GTP-dependent ribosomal translocation step during translation elongation. During this step, the ribosome changes from the pre-translocational (PRE) to the post-translocational (POST) state as the newly formed A-site-bound peptidyl-tRNA and P-site-bound deacylated tRNA move to the P and E sites, respectively. Catalyzes the coordinated movement of the two tRNA molecules, the mRNA and conformational changes in the ribosome. The protein is Elongation factor 2 of Halomicrobium mukohataei (strain ATCC 700874 / DSM 12286 / JCM 9738 / NCIMB 13541) (Haloarcula mukohataei).